A 477-amino-acid chain; its full sequence is MSAEFFSSKREEGSLASGPSFRSNQRKILNLLLERDASFSISSDLPTTPVEKKLFGDSANLSILSGGTPKRCLDLSNLSSGEMSATQLTASADLDETGHLESTGPEQVRLAGMNYRQHLIKCSPAQLFCSTPNALEHGRRKKDAICGSSANKENDNGNLVENEMKHLGSPITTVSKLHKNPELAEDQAEEISDELMEFSLEDQEKAKPPLNWSSLYRSSSLPDSLNSPSLKQVVKFKDSTIPDKLKKKYCSNQKELGKGLGLKKMVSLCDINMTQMLEEDSNQGPLIGDFSKVCALPTVSGKHQDLKYVNPETVAALLSGEFQGLIEKFYIIDCRYPYEYLGGHIQGALNLHSQEELYNFFLKKPIVPWDNQKRIVIVFHCEFSSERGPRMCRSLREEDRTLNQYPALYYPELYILKGGYRDFFPEYMELCEPQSYCPMHHQDHKAELLRCRNQSKAWEGERQLQEQIALLVKDVSP.

Positions 1–20 (MSAEFFSSKREEGSLASGPS) are disordered. Residue serine 2 is modified to N-acetylserine. A phosphoserine mark is found at serine 20 and serine 38. Threonine 48 is subject to Phosphothreonine; by CDK1. Phosphoserine is present on residues serine 58, serine 62, and serine 65. A Phosphothreonine; by CDK1 modification is found at threonine 68. Residue serine 123 is modified to Phosphoserine; by CDK1. A Phosphoserine modification is found at serine 130. At threonine 131 the chain carries Phosphothreonine. Position 169 is a phosphoserine; by CDK1 (serine 169). A phosphoserine; by PLK3 mark is found at serine 192 and serine 199. At serine 218 the chain carries Phosphoserine; by CDK1. Serine 220 is modified (phosphoserine; by CHEK1, CHEK2, BRSK1, MAPK14 AND MARK3). The Rhodanese domain maps to 325–432 (LIEKFYIIDC…FFPEYMELCE (108 aa)). Cysteine 381 is a catalytic residue. Serine 476 carries the phosphoserine modification.

The protein belongs to the MPI phosphatase family. In terms of assembly, interacts with MAPK14 and 14-3-3 proteins. When phosphorylated on Ser-130 and/or Thr-131, interacts with PLK1. Interacts with MARK3/C-TAK1. Post-translationally, phosphorylated by CHEK1 and MAPK14 at Ser-220. This phosphorylation creates a binding site for 14-3-3 protein and inhibits the phosphatase. Phosphorylated by PLK4. Phosphorylated by PLK1, leading to activate the phosphatase activity. Phosphorylation by PLK3 at Ser-192 promotes nuclear translocation. Ser-199 is a minor phosphorylation site. Phosphorylation by CDK1 occurs at G2 and G2-M transition and leads to increased activity.

The protein localises to the nucleus. The catalysed reaction is O-phospho-L-tyrosyl-[protein] + H2O = L-tyrosyl-[protein] + phosphate. Functionally, functions as a dosage-dependent inducer in mitotic control. Tyrosine protein phosphatase required for progression of the cell cycle. When phosphorylated, highly effective in activating G2 cells into prophase. Directly dephosphorylates CDK1 and activates its kinase activity. This chain is M-phase inducer phosphatase 3 (CDC25C), found in Bos taurus (Bovine).